The chain runs to 249 residues: Probable transcriptional regulatory protein GOX1679 (249 aa).

The protein belongs to the TACO1 family.

The protein localises to the cytoplasm. The polypeptide is Probable transcriptional regulatory protein GOX1679 (Gluconobacter oxydans (strain 621H) (Gluconobacter suboxydans)).